Reading from the N-terminus, the 384-residue chain is 1-deoxy-D-xylulose 5-phosphate reductoisomerase (384 aa).

Positions 10, 11, 12, 13, 37, 38, and 124 each coordinate NADPH. Residue lysine 125 coordinates 1-deoxy-D-xylulose 5-phosphate. Glutamate 126 provides a ligand contact to NADPH. Residue aspartate 150 coordinates Mn(2+). 1-deoxy-D-xylulose 5-phosphate-binding residues include serine 151, glutamate 152, serine 176, and histidine 199. Glutamate 152 contacts Mn(2+). Glycine 205 serves as a coordination point for NADPH. The 1-deoxy-D-xylulose 5-phosphate site is built by serine 212, asparagine 217, lysine 218, and glutamate 221. Glutamate 221 contacts Mn(2+).

The protein belongs to the DXR family. It depends on Mg(2+) as a cofactor. Mn(2+) is required as a cofactor.

It carries out the reaction 2-C-methyl-D-erythritol 4-phosphate + NADP(+) = 1-deoxy-D-xylulose 5-phosphate + NADPH + H(+). The protein operates within isoprenoid biosynthesis; isopentenyl diphosphate biosynthesis via DXP pathway; isopentenyl diphosphate from 1-deoxy-D-xylulose 5-phosphate: step 1/6. Its function is as follows. Catalyzes the NADPH-dependent rearrangement and reduction of 1-deoxy-D-xylulose-5-phosphate (DXP) to 2-C-methyl-D-erythritol 4-phosphate (MEP). The chain is 1-deoxy-D-xylulose 5-phosphate reductoisomerase from Clostridium perfringens (strain ATCC 13124 / DSM 756 / JCM 1290 / NCIMB 6125 / NCTC 8237 / Type A).